The primary structure comprises 290 residues: Agglutinin-2 (290 aa).

Residues 1–35 (MAISNTNLLQTKKPISLPLLAFITLFLMLLNRVNS) form the signal peptide. N-linked (GlcNAc...) asparagine glycosylation is present at Asn-155. Mn(2+)-binding residues include Glu-165 and Asp-167. Asp-167, Asn-171, and Asp-175 together coordinate Ca(2+). Mn(2+) is bound by residues Asp-175 and His-180. Asn-200 carries an N-linked (GlcNAc...) asparagine glycan.

It belongs to the leguminous lectin family. Homotetramer.

In terms of biological role, mannose/glucose binding bark lectin. Functionally, bark lectins are storage proteins that probably maintain stocks of nitrogen during dormant period. Self-aggregatable molecules that can bind their own carbohydrate side chains. They could also play a role in the plant's defense against phytophagous invertebrates or herbivorous higher animals. The protein is Agglutinin-2 of Cladrastis kentukea (Yellow wood).